A 239-amino-acid polypeptide reads, in one-letter code: Fatty acid metabolism regulator protein (239 aa).

The region spanning 6–74 (KGPASFAEKY…HGKPTQVNNF (69 aa)) is the HTH gntR-type domain. The segment at residues 34 to 53 (ERELSELIGVTRTTLREVLQ) is a DNA-binding region (H-T-H motif).

Homodimer.

The protein localises to the cytoplasm. Functionally, multifunctional regulator of fatty acid metabolism. The protein is Fatty acid metabolism regulator protein of Shewanella frigidimarina (strain NCIMB 400).